We begin with the raw amino-acid sequence, 224 residues long: Transcriptional regulatory protein DltR (224 aa).

Residues 2 to 116 (RLLVVEDEKS…ELLARIRLRT (115 aa)) enclose the Response regulatory domain. At Asp51 the chain carries 4-aspartylphosphate. Positions 124–222 (ANQLRLGNIR…TKGFGYSLEE (99 aa)) form a DNA-binding region, ompR/PhoB-type.

In terms of processing, phosphorylated by DltS.

The protein localises to the cytoplasm. Member of the two-component regulatory system DltS/DltR. Regulates the expression of the dlt operon. The chain is Transcriptional regulatory protein DltR (dltR) from Streptococcus agalactiae serotype III (strain NEM316).